The following is a 122-amino-acid chain: Urocortin (122 aa).

Residues 1 to 25 (MIQRGRATLLVALLLLAQLRPESSQ) form the signal peptide. Positions 26-80 (WSPAAAAATGVQDPNLRWSPGVRNQGGGVRALLLLLAERFPRRAGSEPAGERQRR) are excised as a propeptide. Val-120 bears the Valine amide mark.

The protein belongs to the sauvagine/corticotropin-releasing factor/urotensin I family. In terms of assembly, interacts with CRHR1 and CRHR2 (via their N-terminal extracellular domain). As to expression, in the organ of Corti, detected in the inner hair cell region (at protein level). Expressed in skin (at protein level).

Its subcellular location is the secreted. Acts in vitro to stimulate the secretion of adrenocorticotropic hormone (ACTH). Binds with high affinity to CRF receptor types 1, 2-alpha, and 2-beta. Plays a role in the establishment of normal hearing thresholds. Reduces food intake and regulates ghrelin levels in gastric body and plasma. The polypeptide is Urocortin (Ucn) (Mus musculus (Mouse)).